A 493-amino-acid polypeptide reads, in one-letter code: Na(+)/H(+) antiporter subunit D (493 aa).

The next 14 helical transmembrane spans lie at 4-23 (LVILPILIPFIVGSFLILFA), 30-52 (RVISGFAVVGMLLVSIYLAVDVY), 72-94 (LVADLFATMMVILASIVGVVCLF), 107-126 (YYFYPFYFFLLAGVNGAFLT), 130-149 (FNLFVFFEVMLIASYILIVL), 162-184 (YVVINVFASILFIVGVAYIYSIT), 204-226 (VLNVIAVIFLVVFAMKGGLFPLY), 233-255 (YFGPPAAIAALFGGLLTKVGIYA), 270-292 (FTHTLILILAGLTMFFGVLGAVS), 299-321 (ILSYHIISQVGYMVMGLGIYTQL), 325-347 (GAIYYIAHHIIVKAALFLFAGAT), 368-390 (WLAWMFFISAISLAGIPPLSGFF), 405-427 (YIIAAVALAVGLLTLFSMMKIFI), and 448-470 (LLLPIVPLVALTIILGFAAEPIF).

It belongs to the CPA3 antiporters (TC 2.A.63) subunit D family. As to quaternary structure, forms a heterooligomeric complex that consists of seven subunits: MrpA, MrpB, MrpC, MrpD, MrpE, MrpF and MrpG.

It localises to the cell membrane. In terms of biological role, mnh complex is a Na(+)Li(+)/H(+) antiporter involved in Na(+) and/or Li(+) excretion and Na(+) resistance. Na(+)/H(+) antiport consumes a transmembrane electrical potential, and is thus inferred to be electrogenic. Does not transport K(+), Ca(2+) or Mg(2+). Functionally, mrp complex is a Na(+)/H(+) antiporter involved in Na(+) excretion and Na(+) resistance. In Alkalihalophilus pseudofirmus (strain ATCC BAA-2126 / JCM 17055 / OF4) (Bacillus pseudofirmus), this protein is Na(+)/H(+) antiporter subunit D (mrpD).